A 200-amino-acid polypeptide reads, in one-letter code: NADH-ubiquinone oxidoreductase 21.3 kDa subunit (200 aa).

3 helical membrane passes run 16 to 36, 48 to 68, and 105 to 125; these read IKSG…MASL, MHVF…GGIY, and FPVI…FAFS.

Complex I is composed of about 40 different subunits.

The protein localises to the mitochondrion inner membrane. The enzyme catalyses a ubiquinone + NADH + 5 H(+)(in) = a ubiquinol + NAD(+) + 4 H(+)(out). Functionally, transfer of electrons from NADH to the respiratory chain. The immediate electron acceptor for the enzyme is believed to be ubiquinone. This Neurospora crassa (strain ATCC 24698 / 74-OR23-1A / CBS 708.71 / DSM 1257 / FGSC 987) protein is NADH-ubiquinone oxidoreductase 21.3 kDa subunit.